The sequence spans 65 residues: Large ribosomal subunit protein bL35 (65 aa).

The disordered stretch occupies residues 1-26 (MPKIKTVRGAAKRFKKTASGGFKRKQ). The segment covering 10-26 (AAKRFKKTASGGFKRKQ) has biased composition (basic residues).

It belongs to the bacterial ribosomal protein bL35 family.

This is Large ribosomal subunit protein bL35 from Haemophilus ducreyi (strain 35000HP / ATCC 700724).